Consider the following 98-residue polypeptide: Putative septation protein SpoVG (98 aa).

It belongs to the SpoVG family.

Essential for sporulation. Interferes with or is a negative regulator of the pathway leading to asymmetric septation. This chain is Putative septation protein SpoVG, found in Shouchella clausii (strain KSM-K16) (Alkalihalobacillus clausii).